Reading from the N-terminus, the 712-residue chain is MGQADISRPVNPDGVEEIGQPTADLGMVMDCVEAGDITPPTKRKSKFSGFGKIFKPWKWRKKKSDKFKETSEVLERKISMRKPREELVKRGLLLEDSEQGGEDPGKLSHATLKNGHTTLIGSTRSSSPVQVEEESERIASLRKPVPEEEPKKRLGSSGSQPHSEAEFVPESIPKQPLLPPKRHLSSSHEANEGQAKDATSSGSLARPSSSASTTAITTAPAATMAATNPAKTVHSSGPPSQAPRTLPAAPASTHTTATLSLTHTGPAKQPPIPPPKPTHRNSNPVIAELSQAINSGTLLSKPSPPLPPKRGIPSALVPTSESAAATTATKAPSDQREKSACSVGSEPLLTPSSSPLPAHIPPEPPQSPPFPAKTFQVVPEIEFPPSLDLPQEIPQQESQKREVPKRMLDHSFGEPQVPPRLPPVPLHIRIQQALTSPLPVTPPLEGSHRAHSLLFENSDNFSEDSSTLGRTRSLPITIEMLKVPDDEEEEEQSHIFAFDEDVASTSVIPKLPQCLQEEEEGKESDSDSEGPIQYRDEEDEDESHHSALANKVKRKDTLAMKLNHKPSEPEMNMNSWPRKSKEEWNEIRHQIGNTLIRRLSQRPTPEELEQRNILQPKNEADRQAEKREIKRRLTRKLSQRPTVAELLARKILRFNEYVEVTDAHDYDRRADKPWTKLTPADKAAIRKELNEFKSSEMEVHEDSKHFTRYHRP.

Disordered regions lie at residues 1–22 and 90–405; these read MGQA…GQPT and RGLL…EVPK. The RPEL 1 repeat unit spans residues 72-97; it reads EVLERKISMRKPREELVKRGLLLEDS. Residues 114-124 show a composition bias toward polar residues; the sequence is NGHTTLIGSTR. S125, S127, S140, and S156 each carry phosphoserine. Basic and acidic residues predominate over residues 136 to 152; that stretch reads ERIASLRKPVPEEEPKK. Residues 198–230 show a composition bias toward low complexity; that stretch reads ATSSGSLARPSSSASTTAITTAPAATMAATNPA. Polar residues predominate over residues 233-243; that stretch reads VHSSGPPSQAP. Positions 245-267 are enriched in low complexity; it reads TLPAAPASTHTTATLSLTHTGPA. 3 positions are modified to phosphoserine: S282, S303, and S353. A compositionally biased stretch (low complexity) spans 345–357; it reads SEPLLTPSSSPLP. Residues 358-371 show a composition bias toward pro residues; the sequence is AHIPPEPPQSPPFP. S436 is subject to Phosphoserine. Phosphothreonine is present on T441. Phosphoserine occurs at positions 452, 462, 473, 524, 526, 567, and 600. The disordered stretch occupies residues 507 to 557; that stretch reads VIPKLPQCLQEEEEGKESDSDSEGPIQYRDEEDEDESHHSALANKVKRKDT. The segment covering 516-528 has biased composition (acidic residues); it reads QEEEEGKESDSDS. 2 RPEL repeats span residues 593 to 618 and 631 to 656; these read NTLI…QPKN and RRLT…RFNE. The segment at 602–626 is disordered; it reads RPTPEELEQRNILQPKNEADRQAEK. A Phosphoserine modification is found at S638.

Belongs to the phosphatase and actin regulator family. In terms of assembly, binds PPP1CA and actin.

The protein resides in the cytoplasm. It is found in the cell projection. It localises to the lamellipodium. Its function is as follows. Regulator of protein phosphatase 1 (PP1) required for neural tube and optic fissure closure, and enteric neural crest cell (ENCCs) migration during development. Acts as an activator of PP1 by interacting with PPP1CA and preventing phosphorylation of PPP1CA at 'Thr-320'. During neural tube closure, localizes to the ventral neural tube and activates PP1, leading to down-regulate cell proliferation within cranial neural tissue and the neural retina. Also acts as a regulator of migration of enteric neural crest cells (ENCCs) by activating PP1, leading to dephosphorylation and subsequent activation of cofilin (COF1 or COF2) and repression of the integrin signaling through the RHO/ROCK pathway. The protein is Phosphatase and actin regulator 4 (PHACTR4) of Bos taurus (Bovine).